The following is a 167-amino-acid chain: MELAEKDKGRDFTLRNARMDDIDQIIKINRLTLPENYPYYFFVEHLKEYGLAFFVAIVDNSVVGYIMPRIEWGFSNIKQLPSLVRKGHVVSIAVLEEYRRKGIATTLLEASMKSMKNDYNAEEIYLEVRVSNYPAIALYEKLNFKKVKVLKGYYADGEDAYLMARPL.

Positions 12 to 167 (FTLRNARMDD…EDAYLMARPL (156 aa)) constitute an N-acetyltransferase domain. Tyr-37 contributes to the substrate binding site. His-88 provides a ligand contact to Zn(2+). Residues 92–94 (IAV) and 100–105 (RKGIAT) contribute to the acetyl-CoA site. Residue Glu-127 participates in Zn(2+) binding. Acetyl-CoA contacts are provided by residues Asn-132 and 139–141 (YEK). Tyr-154 lines the substrate pocket.

The protein belongs to the acetyltransferase family. ARD1 subfamily. In terms of assembly, homodimer.

The protein resides in the cytoplasm. The catalysed reaction is N-terminal L-alanyl-[protein] + acetyl-CoA = N-terminal N(alpha)-acetyl-L-alanyl-[protein] + CoA + H(+). The enzyme catalyses N-terminal L-seryl-[protein] + acetyl-CoA = N-terminal N(alpha)-acetyl-L-seryl-[protein] + CoA + H(+). It carries out the reaction N-terminal L-methionyl-L-leucyl-[protein] + acetyl-CoA = N-terminal N(alpha)-acetyl-L-methionyl-L-leucyl-[protein] + CoA + H(+). It catalyses the reaction N-terminal L-methionyl-L-glutamyl-[protein] + acetyl-CoA = N-terminal N(alpha)-acetyl-L-methionyl-L-glutamyl-[protein] + CoA + H(+). In terms of biological role, displays alpha (N-terminal) acetyltransferase activity. Catalyzes the covalent attachment of an acetyl moiety from acetyl-CoA to the free alpha-amino group at the N-terminus of a protein. NAT is able to acetylate the alpha-amino group of methionine, alanine and serine N-terminal residue substrates, however it has a preference for Ser-N-terminal substrates. The polypeptide is N-alpha-acetyltransferase (Saccharolobus solfataricus (strain ATCC 35092 / DSM 1617 / JCM 11322 / P2) (Sulfolobus solfataricus)).